We begin with the raw amino-acid sequence, 561 residues long: Asparagine synthetase [glutamine-hydrolyzing] (561 aa).

The active-site For GATase activity is the cysteine 2. One can recognise a Glutamine amidotransferase type-2 domain in the interval 2–191 (CGIWALFGSD…PGHYEVLDLK (190 aa)). Residues 49–53 (RLAVV), 75–77 (NGE), and aspartate 97 contribute to the L-glutamine site. The Asparagine synthetase domain occupies 213 to 536 (HAIYDSVEKL…PGRADWLTHY (324 aa)). Residues leucine 256, isoleucine 288, and 363–364 (SG) contribute to the ATP site. Residue lysine 385 is modified to N6-acetyllysine. Threonine 545 carries the post-translational modification Phosphothreonine. Serine 557 carries the phosphoserine modification.

The catalysed reaction is L-aspartate + L-glutamine + ATP + H2O = L-asparagine + L-glutamate + AMP + diphosphate + H(+). The protein operates within amino-acid biosynthesis; L-asparagine biosynthesis; L-asparagine from L-aspartate (L-Gln route): step 1/1. This is Asparagine synthetase [glutamine-hydrolyzing] (Asns) from Rattus norvegicus (Rat).